We begin with the raw amino-acid sequence, 574 residues long: Penicillin-binding protein activator LpoA (574 aa).

The signal sequence occupies residues 1-25; sequence MTILLQRAKFKKRLMPILFPLMLAG. Cysteine 26 carries N-palmitoyl cysteine lipidation. Cysteine 26 is lipidated: S-diacylglycerol cysteine.

This sequence belongs to the LpoA family. In terms of assembly, interacts with PBP1a.

It is found in the cell outer membrane. Functionally, regulator of peptidoglycan synthesis that is essential for the function of penicillin-binding protein 1A (PBP1a). This Mannheimia succiniciproducens (strain KCTC 0769BP / MBEL55E) protein is Penicillin-binding protein activator LpoA.